A 686-amino-acid polypeptide reads, in one-letter code: Ovotransferrin (686 aa).

2 consecutive Transferrin-like domains span residues 7–333 (VRWC…SLRK) and 345–670 (IQWC…SLNT). Disulfide bonds link Cys-10/Cys-45, Cys-20/Cys-36, Cys-115/Cys-197, Cys-160/Cys-174, Cys-171/Cys-182, and Cys-228/Cys-242. The interval 333–341 (KDQLTVGPR) is connecting region. 9 disulfide bridges follow: Cys-348/Cys-380, Cys-358/Cys-371, Cys-405/Cys-680, Cys-421/Cys-643, Cys-454/Cys-530, Cys-478/Cys-671, Cys-488/Cys-502, Cys-499/Cys-513, and Cys-570/Cys-584. A glycan (N-linked (GlcNAc...) asparagine) is linked at Asn-473. N-linked (GlcNAc...) asparagine glycosylation is present at Asn-548.

Belongs to the transferrin family. As to quaternary structure, monomer.

It localises to the secreted. In terms of biological role, transferrins are iron binding transport proteins which can bind two Fe(3+) ions in association with the binding of an anion, usually bicarbonate. It is responsible for the transport of iron from sites of absorption and heme degradation to those of storage and utilization. Serum transferrin may also have a further role in stimulating cell proliferation. Its function is as follows. Ovotransferrin has a bacteriostatic function. Its concentration in avian egg is the highest concentration of any transferrin in vivo. The protein is Ovotransferrin of Anas platyrhynchos (Mallard).